The chain runs to 424 residues: Serine hydroxymethyltransferase (424 aa).

(6S)-5,6,7,8-tetrahydrofolate is bound by residues L119 and 123–125; that span reads GHL. Residue K228 is modified to N6-(pyridoxal phosphate)lysine. (6S)-5,6,7,8-tetrahydrofolate is bound at residue 353–355; sequence SAF.

It belongs to the SHMT family. As to quaternary structure, homodimer. Pyridoxal 5'-phosphate is required as a cofactor.

The protein resides in the cytoplasm. It catalyses the reaction (6R)-5,10-methylene-5,6,7,8-tetrahydrofolate + glycine + H2O = (6S)-5,6,7,8-tetrahydrofolate + L-serine. It functions in the pathway one-carbon metabolism; tetrahydrofolate interconversion. Its pathway is amino-acid biosynthesis; glycine biosynthesis; glycine from L-serine: step 1/1. In terms of biological role, catalyzes the reversible interconversion of serine and glycine with tetrahydrofolate (THF) serving as the one-carbon carrier. Also exhibits THF-independent aldolase activity toward beta-hydroxyamino acids, producing glycine and aldehydes, via a retro-aldol mechanism. This chain is Serine hydroxymethyltransferase, found in Natronomonas pharaonis (strain ATCC 35678 / DSM 2160 / CIP 103997 / JCM 8858 / NBRC 14720 / NCIMB 2260 / Gabara) (Halobacterium pharaonis).